A 265-amino-acid chain; its full sequence is Protein Rv2993c (265 aa).

3 residues coordinate a divalent metal cation: Glu-114, Glu-116, and Asp-145.

The protein in the C-terminal section; belongs to the FAH family. A divalent metal cation serves as cofactor.

The chain is Protein Rv2993c from Mycobacterium tuberculosis (strain ATCC 25618 / H37Rv).